The primary structure comprises 866 residues: Paramyosin (866 aa).

Positions 1–22 (MMNHDTESHVKISRTIYRGVSP) are nonhelical region. Positions 23–839 (STTRLESRVR…AERTVTVRRV (817 aa)) form a coiled coil. Residues 840–866 (GPGGRAVSVARELSVTSNRGMRATSMM) are nonhelical region.

This sequence belongs to the paramyosin family. As to quaternary structure, homodimer.

The protein resides in the cytoplasm. It localises to the myofibril. Its function is as follows. Paramyosin is a major structural component of many thick filaments isolated from invertebrate muscles. This Schistosoma japonicum (Blood fluke) protein is Paramyosin.